A 101-amino-acid chain; its full sequence is Interleukin-8 (101 aa).

An N-terminal signal peptide occupies residues 1–22; the sequence is MTSKLAVALLAAFLLSAALCEG. Residue Arg-27 is modified to Citrulline. 2 cysteine pairs are disulfide-bonded: Cys-34/Cys-61 and Cys-36/Cys-77.

The protein belongs to the intercrine alpha (chemokine CxC) family. In terms of assembly, homodimer. Interacts with TNFAIP6 (via Link domain); this interaction interferes with chemokine binding to glycosaminoglycans. In terms of processing, citrullination at Arg-27 prevents proteolysis, and dampens tissue inflammation, it also enhances leukocytosis, possibly through impaired chemokine clearance from the blood circulation.

Its subcellular location is the secreted. Chemotactic factor that mediates inflammatory response by attracting neutrophils, basophils, and T-cells to clear pathogens and protect the host from infection. Also plays an important role in neutrophil activation. Released in response to an inflammatory stimulus, exerts its effect by binding to the G-protein-coupled receptors CXCR1 and CXCR2, primarily found in neutrophils, monocytes and endothelial cells. G-protein heterotrimer (alpha, beta, gamma subunits) constitutively binds to CXCR1/CXCR2 receptor and activation by IL8 leads to beta and gamma subunits release from Galpha (GNAI2 in neutrophils) and activation of several downstream signaling pathways including PI3K and MAPK pathways. The protein is Interleukin-8 (CXCL8) of Macaca mulatta (Rhesus macaque).